A 257-amino-acid polypeptide reads, in one-letter code: Phycoerythrobilin:ferredoxin oxidoreductase (257 aa).

This sequence belongs to the HY2 family.

The catalysed reaction is (3Z)-phycoerythrobilin + oxidized 2[4Fe-4S]-[ferredoxin] = 15,16-dihydrobiliverdin + reduced 2[4Fe-4S]-[ferredoxin] + 2 H(+). Catalyzes the two-electron reduction of the C2 and C3(1) diene system of 15,16-dihydrobiliverdin. The protein is Phycoerythrobilin:ferredoxin oxidoreductase of Synechococcus sp. (strain CC9311).